The following is a 325-amino-acid chain: MPPVSSARNLKELPKFRDGLSYLYVEHAVVEREAGGIGIYDQEGLTLAPVAGLGVLFLGPGTRITHAAVRLLAENGCTVAWVGEGMARFYAQGLGDTRSAARFYRQARAWADPALHLEVVMRLYRMRFSEPLPEGLTLEQVRGLEGVRVRNAYARWSRETGVPWYGRSYDRGNWRAADPVNRALSAGASYLYGLAHAAIVSLGFSPALGFIHTGKLLSFVYDIADLYKADYLVPAAFRTVAESEEAVERRVRRALREAIQEGRLLERMAEDLLNLFRGLGLPEEEDPVEEDPTRPGGLWDLEGEVEGGVAYGGDDPGEGAEEPEG.

3 residues coordinate Mn(2+): E145, H212, and D225. The interval 283 to 325 (EEEDPVEEDPTRPGGLWDLEGEVEGGVAYGGDDPGEGAEEPEG) is disordered. The segment covering 315–325 (DPGEGAEEPEG) has biased composition (acidic residues).

The protein belongs to the CRISPR-associated endonuclease Cas1 family. Homodimer, forms a heterotetramer with a Cas2 homodimer. It depends on Mg(2+) as a cofactor. The cofactor is Mn(2+).

CRISPR (clustered regularly interspaced short palindromic repeat), is an adaptive immune system that provides protection against mobile genetic elements (viruses, transposable elements and conjugative plasmids). CRISPR clusters contain spacers, sequences complementary to antecedent mobile elements, and target invading nucleic acids. CRISPR clusters are transcribed and processed into CRISPR RNA (crRNA). Acts as a dsDNA endonuclease. Involved in the integration of spacer DNA into the CRISPR cassette. This is CRISPR-associated endonuclease Cas1 2 from Thermus thermophilus (strain ATCC 27634 / DSM 579 / HB8).